The sequence spans 509 residues: Maturase K (509 aa).

It belongs to the intron maturase 2 family. MatK subfamily.

It localises to the plastid. Its subcellular location is the chloroplast. Functionally, usually encoded in the trnK tRNA gene intron. Probably assists in splicing its own and other chloroplast group II introns. In Citrus sinensis (Sweet orange), this protein is Maturase K.